The chain runs to 564 residues: Hsp70-Hsp90 organising protein (564 aa).

TPR repeat units lie at residues 7-40 (AQRL…DPLD), 42-74 (VLYS…KKDW), and 76-108 (KGYI…DPNN). Residues 197–239 (EGNDAEERQRQQREEEERRKKKEEEERKKKEEEEMKKQNRTPE) adopt a coiled-coil conformation. The interval 199 to 247 (NDAEERQRQQREEEERRKKKEEEERKKKEEEEMKKQNRTPEQIQGDEHK) is disordered. The segment covering 201–233 (AEERQRQQREEEERRKKKEEEERKKKEEEEMKK) has biased composition (basic and acidic residues). TPR repeat units lie at residues 243 to 276 (GDEH…NPND), 278 to 310 (MYHY…RYNF), 318 to 351 (AKLY…DNNR), 378 to 411 (AEEH…NPND), 413 to 445 (KLYS…DPTF), and 446 to 479 (VKAY…DPNN). The STI1 domain occupies 513–552 (DPEIQQIISDPQFQIILQKLNENPNSISEYIKDPKIFNGL).

Monomer. Homodimer. Forms a complex composed of HOP and chaperones HSP70 and HSP90; the interaction is stronger in the absence of ATP. Interacts (via TPR 1, 2, 3, 7, 8 and 9 repeats) with HSP70 (via C-terminus); the interaction is direct and is stronger in the absence of ATP. Interacts (via TPR 4, 5 and 6 repeats) with HSP90 (via C-terminus); the interaction is direct.

Its subcellular location is the cytoplasm. Its function is as follows. Acts as a co-chaperone and mediates the association of the chaperones HSP70 and HSP90 probably facilitating substrate transfer from HSP70 to HSP90. Stimulates HSP70 ATPase activity and, in contrast, inhibits HSP90 ATPase activity. The protein is Hsp70-Hsp90 organising protein of Plasmodium falciparum (isolate 3D7).